The chain runs to 87 residues: Kappa 1a-bungarotoxin (87 aa).

The signal sequence occupies residues 1 to 21 (MKTLLLTLVVVTIVCLDLGYT). 5 disulfides stabilise this stretch: Cys-24-Cys-42, Cys-35-Cys-63, Cys-48-Cys-52, Cys-67-Cys-79, and Cys-80-Cys-85.

The protein belongs to the three-finger toxin family. Long-chain subfamily. Kappa-neurotoxin sub-subfamily. In terms of assembly, homo- and heterodimer; non-covalently linked. As to expression, expressed by the venom gland.

The protein resides in the secreted. Postsynaptic neurotoxin that binds and inhibits neuronal nicotinic acetylcholine receptors (nAChR) with high affinity (IC(50)&lt;100 nM). Is a selective, and slowly reversible antagonist of alpha-3/CHRNA3-containing and some alpha-4/CHRNA4-containing AChRs. The sequence is that of Kappa 1a-bungarotoxin from Bungarus candidus (Malayan krait).